A 357-amino-acid chain; its full sequence is UDP-N-acetylglucosamine--N-acetylmuramyl-(pentapeptide) pyrophosphoryl-undecaprenol N-acetylglucosamine transferase (357 aa).

Residues arginine 166, serine 196, and glutamine 290 each coordinate UDP-N-acetyl-alpha-D-glucosamine.

It belongs to the glycosyltransferase 28 family. MurG subfamily.

The protein resides in the cell membrane. It catalyses the reaction Mur2Ac(oyl-L-Ala-gamma-D-Glu-L-Lys-D-Ala-D-Ala)-di-trans,octa-cis-undecaprenyl diphosphate + UDP-N-acetyl-alpha-D-glucosamine = beta-D-GlcNAc-(1-&gt;4)-Mur2Ac(oyl-L-Ala-gamma-D-Glu-L-Lys-D-Ala-D-Ala)-di-trans,octa-cis-undecaprenyl diphosphate + UDP + H(+). Its pathway is cell wall biogenesis; peptidoglycan biosynthesis. Its function is as follows. Cell wall formation. Catalyzes the transfer of a GlcNAc subunit on undecaprenyl-pyrophosphoryl-MurNAc-pentapeptide (lipid intermediate I) to form undecaprenyl-pyrophosphoryl-MurNAc-(pentapeptide)GlcNAc (lipid intermediate II). This Staphylococcus epidermidis (strain ATCC 35984 / DSM 28319 / BCRC 17069 / CCUG 31568 / BM 3577 / RP62A) protein is UDP-N-acetylglucosamine--N-acetylmuramyl-(pentapeptide) pyrophosphoryl-undecaprenol N-acetylglucosamine transferase.